The chain runs to 420 residues: D-tagatose-1,6-bisphosphate aldolase subunit GatZ (420 aa).

It belongs to the GatZ/KbaZ family. GatZ subfamily. As to quaternary structure, forms a complex with GatY.

It functions in the pathway carbohydrate metabolism; D-tagatose 6-phosphate degradation; D-glyceraldehyde 3-phosphate and glycerone phosphate from D-tagatose 6-phosphate: step 2/2. In terms of biological role, component of the tagatose-1,6-bisphosphate aldolase GatYZ that is required for full activity and stability of the Y subunit. Could have a chaperone-like function for the proper and stable folding of GatY. When expressed alone, GatZ does not show any aldolase activity. Is involved in the catabolism of galactitol. The protein is D-tagatose-1,6-bisphosphate aldolase subunit GatZ of Escherichia coli (strain SE11).